A 383-amino-acid chain; its full sequence is Cyclin-D4-2 (383 aa).

Residues 51 to 62 show a composition bias toward gly residues; the sequence is AAGGGGGSGGGG. 3 disordered regions span residues 51 to 70, 313 to 335, and 354 to 383; these read AAGG…EDMF, QPKP…PESP, and ATIA…KLSR. Positions 323–335 are enriched in low complexity; it reads SASASSSSVPESP.

This sequence belongs to the cyclin family. Cyclin D subfamily.

This is Cyclin-D4-2 (CYCD4-2) from Oryza sativa subsp. japonica (Rice).